A 428-amino-acid polypeptide reads, in one-letter code: CRS2-associated factor 1, mitochondrial (428 aa).

The transit peptide at 1 to 21 (MLLLAGLLRRARPPRRPSVRR) directs the protein to the mitochondrion. Disordered regions lie at residues 33–100 (PPAS…REPK) and 129–152 (HADD…RERV). CRM domains lie at 155–253 (EPLT…KRPV) and 275–371 (EGLT…IQDN). The interval 378–428 (SVLEEESAGAESENGDQEQASSDWASDECSQLSSSDEMPDDKSAISEADSD) is disordered. Positions 380–393 (LEEESAGAESENGD) are enriched in acidic residues. Positions 394-413 (QEQASSDWASDECSQLSSSD) are enriched in polar residues.

In terms of assembly, part of large ribonucleo-protein complexes that include group IIB introns.

Its subcellular location is the mitochondrion. In terms of biological role, may be involved in the splicing of group IIB introns in mitochondria. The protein is CRS2-associated factor 1, mitochondrial of Oryza sativa subsp. japonica (Rice).